The following is a 295-amino-acid chain: Ribosomal RNA small subunit methyltransferase A (295 aa).

Residues N31, L33, G58, E79, D104, and N129 each contribute to the S-adenosyl-L-methionine site.

This sequence belongs to the class I-like SAM-binding methyltransferase superfamily. rRNA adenine N(6)-methyltransferase family. RsmA subfamily.

The protein localises to the cytoplasm. The catalysed reaction is adenosine(1518)/adenosine(1519) in 16S rRNA + 4 S-adenosyl-L-methionine = N(6)-dimethyladenosine(1518)/N(6)-dimethyladenosine(1519) in 16S rRNA + 4 S-adenosyl-L-homocysteine + 4 H(+). Its function is as follows. Specifically dimethylates two adjacent adenosines (A1518 and A1519) in the loop of a conserved hairpin near the 3'-end of 16S rRNA in the 30S particle. May play a critical role in biogenesis of 30S subunits. The polypeptide is Ribosomal RNA small subunit methyltransferase A (Leuconostoc citreum (strain KM20)).